Consider the following 212-residue polypeptide: General odorant-binding protein 68 (212 aa).

The signal sequence occupies residues 1 to 28 (MATTIARIGSANWAKLLVLLWLVQLATA). Intrachain disulfides connect C64–C85, C80–C152, and C130–C162.

The protein belongs to the PBP/GOBP family.

The protein resides in the secreted. Its function is as follows. Present in the aqueous fluid surrounding olfactory sensory dendrites and are thought to aid in the capture and transport of hydrophobic odorants into and through this fluid. The sequence is that of General odorant-binding protein 68 (Obp68) from Anopheles gambiae (African malaria mosquito).